A 235-amino-acid polypeptide reads, in one-letter code: 7-cyano-7-deazaguanine synthase (235 aa).

ATP is bound at residue 8–18 (FSGGQDSTTCL). Positions 187, 196, 199, and 202 each coordinate Zn(2+).

This sequence belongs to the QueC family. It depends on Zn(2+) as a cofactor.

The enzyme catalyses 7-carboxy-7-deazaguanine + NH4(+) + ATP = 7-cyano-7-deazaguanine + ADP + phosphate + H2O + H(+). The protein operates within purine metabolism; 7-cyano-7-deazaguanine biosynthesis. Functionally, catalyzes the ATP-dependent conversion of 7-carboxy-7-deazaguanine (CDG) to 7-cyano-7-deazaguanine (preQ(0)). The chain is 7-cyano-7-deazaguanine synthase from Aeromonas hydrophila subsp. hydrophila (strain ATCC 7966 / DSM 30187 / BCRC 13018 / CCUG 14551 / JCM 1027 / KCTC 2358 / NCIMB 9240 / NCTC 8049).